The chain runs to 403 residues: Histidine decarboxylase (403 aa).

Substrate is bound at residue His-120. Position 233 is an N6-(pyridoxal phosphate)lysine (Lys-233).

This sequence belongs to the group II decarboxylase family. In terms of assembly, homotetramer. Requires pyridoxal 5'-phosphate as cofactor.

The enzyme catalyses L-histidine + H(+) = histamine + CO2. The sequence is that of Histidine decarboxylase from Pseudomonas entomophila (strain L48).